The chain runs to 354 residues: DNA ligase C2 (354 aa).

The active-site N6-AMP-lysine intermediate is Lys29.

Belongs to the ATP-dependent DNA ligase family.

The enzyme catalyses ATP + (deoxyribonucleotide)n-3'-hydroxyl + 5'-phospho-(deoxyribonucleotide)m = (deoxyribonucleotide)n+m + AMP + diphosphate.. In terms of biological role, DNA ligase that seals nicks in double-stranded DNA during DNA replication, DNA recombination and DNA repair. Has weak intrinsic nick joining activities and accumulates DNA-adenylate. Acts as a backup for LigD in the Ku-LigD-dependent NHEJ pathway. In Mycolicibacterium smegmatis (strain ATCC 700084 / mc(2)155) (Mycobacterium smegmatis), this protein is DNA ligase C2 (ligC2).